Reading from the N-terminus, the 214-residue chain is Urease accessory protein UreE (214 aa).

Positions 163–214 (NAEPSGVDHSHEATDSGHGYGEDHDHDHSHDHNHDHDHNHDHDHSHSHDSHE) are disordered. Over residues 168–214 (GVDHSHEATDSGHGYGEDHDHDHSHDHNHDHDHNHDHDHSHSHDSHE) the composition is skewed to basic and acidic residues.

Belongs to the UreE family.

Its subcellular location is the cytoplasm. Involved in urease metallocenter assembly. Binds nickel. Probably functions as a nickel donor during metallocenter assembly. This chain is Urease accessory protein UreE, found in Natronomonas pharaonis (strain ATCC 35678 / DSM 2160 / CIP 103997 / JCM 8858 / NBRC 14720 / NCIMB 2260 / Gabara) (Halobacterium pharaonis).